Consider the following 451-residue polypeptide: PTS system cellobiose-specific EIIC component (451 aa).

Residues 8–423 (LEDRVMPVAG…FIAFAIYYPF (416 aa)) enclose the PTS EIIC type-3 domain. Helical transmembrane passes span 31–51 (GIIL…VGFL), 72–92 (LLYP…FGVA), 104–124 (LSAG…QVPF), 138–158 (GIPV…LAIV), 187–207 (FVAL…RLIL), 227–247 (LSVL…VQLL), 250–270 (TGLH…LSLM), 293–313 (FFDL…ALTM), 347–367 (IVMN…LVVV), and 407–427 (ILQI…FSIW).

The protein localises to the cell membrane. In terms of biological role, the phosphoenolpyruvate-dependent sugar phosphotransferase system (sugar PTS), a major carbohydrate active transport system, catalyzes the phosphorylation of incoming sugar substrates concomitantly with their translocation across the cell membrane. The enzyme II CelABD PTS system is involved in cellobiose transport. This is PTS system cellobiose-specific EIIC component from Geobacillus stearothermophilus (Bacillus stearothermophilus).